Here is a 765-residue protein sequence, read N- to C-terminus: 5-methyltetrahydropteroyltriglutamate--homocysteine methyltransferase 2 (765 aa).

5-methyltetrahydropteroyltri-L-glutamate-binding residues include Lys18 and Asn116. L-homocysteine contacts are provided by residues 437–439 and Glu490; that span reads IGS. L-methionine is bound by residues 437–439 and Glu490; that span reads IGS. 5-methyltetrahydropteroyltri-L-glutamate-binding positions include Asp495, Tyr518, 521–522, and Trp567; that span reads RC. Position 605 (Asp605) interacts with L-homocysteine. Asp605 is an L-methionine binding site. 5 residues coordinate Zn(2+): His647, Cys649, His658, Asp662, and Glu671. His701 serves as the catalytic Proton donor. Cys733 is a binding site for Zn(2+).

This sequence belongs to the vitamin-B12 independent methionine synthase family. Zn(2+) is required as a cofactor. As to expression, expressed in leaves, stems and siliques.

It is found in the cytoplasm. The protein resides in the cytosol. The enzyme catalyses 5-methyltetrahydropteroyltri-L-glutamate + L-homocysteine = tetrahydropteroyltri-L-glutamate + L-methionine. It participates in amino-acid biosynthesis; L-methionine biosynthesis via de novo pathway; L-methionine from L-homocysteine (MetE route): step 1/1. Functionally, catalyzes the transfer of a methyl group from 5-methyltetrahydrofolate to homocysteine resulting in methionine formation. This Arabidopsis thaliana (Mouse-ear cress) protein is 5-methyltetrahydropteroyltriglutamate--homocysteine methyltransferase 2 (MS2).